A 438-amino-acid chain; its full sequence is Glutamyl-tRNA reductase (438 aa).

Substrate is bound by residues 49-52 (TCNR), serine 109, 114-116 (EGQ), and glutamine 120. The Nucleophile role is filled by cysteine 50. 198-203 (GAGRMS) contributes to the NADP(+) binding site.

The protein belongs to the glutamyl-tRNA reductase family. As to quaternary structure, homodimer.

The enzyme catalyses (S)-4-amino-5-oxopentanoate + tRNA(Glu) + NADP(+) = L-glutamyl-tRNA(Glu) + NADPH + H(+). It functions in the pathway porphyrin-containing compound metabolism; protoporphyrin-IX biosynthesis; 5-aminolevulinate from L-glutamyl-tRNA(Glu): step 1/2. The protein operates within porphyrin-containing compound metabolism; chlorophyll biosynthesis. Its function is as follows. Catalyzes the NADPH-dependent reduction of glutamyl-tRNA(Glu) to glutamate 1-semialdehyde (GSA). This is Glutamyl-tRNA reductase from Synechococcus sp. (strain WH7803).